Reading from the N-terminus, the 661-residue chain is Putative DUF21 domain-containing protein At3g13070, chloroplastic (661 aa).

The transit peptide at Met1 to Arg71 directs the protein to the chloroplast. Helical transmembrane passes span Gly105–Ala125, Gly162–Ile182, Phe213–Thr233, Ile239–Leu259, and Trp285–Leu305. The region spanning Val154–Glu340 is the CNNM transmembrane domain. CBS domains are found at residues Met359 to Ser420 and Met426 to Glu484. Disordered stretches follow at residues Glu559–Lys578 and Ser628–Gln661. Composition is skewed to acidic residues over residues Ser560–Gly570 and Glu630–Ser643. Over residues Leu648–Gln661 the composition is skewed to basic and acidic residues.

Its subcellular location is the plastid. The protein localises to the chloroplast membrane. The sequence is that of Putative DUF21 domain-containing protein At3g13070, chloroplastic (CBSDUFCH1) from Arabidopsis thaliana (Mouse-ear cress).